The chain runs to 435 residues: Elongation factor 1-alpha (435 aa).

The region spanning 4-227 (KPHLNLIVIG…YLDQLELPPK (224 aa)) is the tr-type G domain. Positions 13 to 20 (GHIDHGKS) are G1. Residue 13 to 20 (GHIDHGKS) participates in GTP binding. Mg(2+) is bound at residue S20. The G2 stretch occupies residues 69–73 (GVTIN). Positions 90–93 (DAPG) are G3. Residues 90-94 (DAPGH) and 152-155 (NKMD) contribute to the GTP site. A G4 region spans residues 152-155 (NKMD). Residues 193-195 (VAP) form a G5 region.

This sequence belongs to the TRAFAC class translation factor GTPase superfamily. Classic translation factor GTPase family. EF-Tu/EF-1A subfamily.

It is found in the cytoplasm. The enzyme catalyses GTP + H2O = GDP + phosphate + H(+). Functionally, GTP hydrolase that promotes the GTP-dependent binding of aminoacyl-tRNA to the A-site of ribosomes during protein biosynthesis. In Saccharolobus solfataricus (strain ATCC 35092 / DSM 1617 / JCM 11322 / P2) (Sulfolobus solfataricus), this protein is Elongation factor 1-alpha.